We begin with the raw amino-acid sequence, 408 residues long: Argininosuccinate synthase (408 aa).

ATP-binding positions include 9–17 (AYSGGLDTS) and alanine 36. L-citrulline-binding residues include tyrosine 87 and serine 92. Glycine 117 is a binding site for ATP. Residues threonine 119, asparagine 123, and aspartate 124 each contribute to the L-aspartate site. Position 123 (asparagine 123) interacts with L-citrulline. L-citrulline is bound by residues arginine 127, serine 176, serine 185, glutamate 261, and tyrosine 273.

It belongs to the argininosuccinate synthase family. Type 1 subfamily. In terms of assembly, homotetramer.

Its subcellular location is the cytoplasm. It carries out the reaction L-citrulline + L-aspartate + ATP = 2-(N(omega)-L-arginino)succinate + AMP + diphosphate + H(+). Its pathway is amino-acid biosynthesis; L-arginine biosynthesis; L-arginine from L-ornithine and carbamoyl phosphate: step 2/3. The protein is Argininosuccinate synthase of Deinococcus deserti (strain DSM 17065 / CIP 109153 / LMG 22923 / VCD115).